A 194-amino-acid chain; its full sequence is Threonylcarbamoyl-AMP synthase (194 aa).

The YrdC-like domain maps to 12-194 (SPNMKDLLIQ…DVMTGKLIRE (183 aa)).

Belongs to the SUA5 family. TsaC subfamily.

The protein localises to the cytoplasm. The catalysed reaction is L-threonine + hydrogencarbonate + ATP = L-threonylcarbamoyladenylate + diphosphate + H2O. Required for the formation of a threonylcarbamoyl group on adenosine at position 37 (t(6)A37) in tRNAs that read codons beginning with adenine. Catalyzes the conversion of L-threonine, HCO(3)(-)/CO(2) and ATP to give threonylcarbamoyl-AMP (TC-AMP) as the acyladenylate intermediate, with the release of diphosphate. In Blochmanniella pennsylvanica (strain BPEN), this protein is Threonylcarbamoyl-AMP synthase.